The chain runs to 746 residues: Ring assembly protein 3 (746 aa).

The protein resides in the cytoplasm. Essential for actinomyosin ring assembly during cytokinesis. Has a role, in conjunction with F-actin, in assembling myosin II-containing proteins, such as myo2, at the division site. The chain is Ring assembly protein 3 (rng3) from Schizosaccharomyces pombe (strain 972 / ATCC 24843) (Fission yeast).